The chain runs to 55 residues: MSTSRKLKSHGMRRGKNRAPHKGVKRGGSKRKYRKGSLKSRKRCDDANRNYRSHL.

Over residues 1–42 (MSTSRKLKSHGMRRGKNRAPHKGVKRGGSKRKYRKGSLKSRK) the composition is skewed to basic residues. Positions 1–55 (MSTSRKLKSHGMRRGKNRAPHKGVKRGGSKRKYRKGSLKSRKRCDDANRNYRSHL) are disordered. Residues Ser9, Ser37, and Ser40 each carry the phosphoserine modification.

This sequence belongs to the nuclear transition protein 1 family. Testis.

It is found in the nucleus. It localises to the chromosome. Plays a key role in the replacement of histones to protamine in the elongating spermatids of mammals. In condensing spermatids, loaded onto the nucleosomes, where it promotes the recruitment and processing of protamines, which are responsible for histone eviction. This chain is Spermatid nuclear transition protein 1 (TNP1), found in Sus scrofa (Pig).